The following is a 79-amino-acid chain: Small ribosomal subunit protein bS18c (79 aa).

Belongs to the bacterial ribosomal protein bS18 family. In terms of assembly, part of the 30S ribosomal subunit.

It localises to the plastid. The protein localises to the chloroplast. This chain is Small ribosomal subunit protein bS18c, found in Physcomitrium patens (Spreading-leaved earth moss).